A 310-amino-acid polypeptide reads, in one-letter code: Probable cell division protein WhiA (310 aa).

Positions 277–310 form a DNA-binding region, H-T-H motif; the sequence is SLKELAEQVPDGPISKSGVNHRLKKLHEIAENLR.

The protein belongs to the WhiA family.

Functionally, involved in cell division and chromosome segregation. The polypeptide is Probable cell division protein WhiA (Lactobacillus delbrueckii subsp. bulgaricus (strain ATCC BAA-365 / Lb-18)).